Reading from the N-terminus, the 177-residue chain is Large ribosomal subunit protein uL6 (177 aa).

The protein belongs to the universal ribosomal protein uL6 family. Part of the 50S ribosomal subunit.

In terms of biological role, this protein binds to the 23S rRNA, and is important in its secondary structure. It is located near the subunit interface in the base of the L7/L12 stalk, and near the tRNA binding site of the peptidyltransferase center. The chain is Large ribosomal subunit protein uL6 from Brucella melitensis biotype 1 (strain ATCC 23456 / CCUG 17765 / NCTC 10094 / 16M).